Reading from the N-terminus, the 113-residue chain is U11-theraphotoxin-Hhn1t (113 aa).

The N-terminal stretch at 1–21 (MNTVRVTFLLVFVLAVSLGQA) is a signal peptide. Positions 22–74 (DKDENRMEMQEKTEQGKSYLDFAENLLLQKLEELEAKLLEEDSEESRNSRQKR) are excised as a propeptide. The span at 60–69 (LEEDSEESRN) shows a compositional bias: basic and acidic residues. The segment at 60–83 (LEEDSEESRNSRQKRCIGEGVPCD) is disordered. Cystine bridges form between Cys-75/Cys-90, Cys-82/Cys-95, and Cys-89/Cys-110.

Belongs to the neurotoxin 14 (magi-1) family. 01 (HNTX-16) subfamily. In terms of tissue distribution, expressed by the venom gland.

The protein resides in the secreted. Functionally, probable ion channel inhibitor. This Cyriopagopus hainanus (Chinese bird spider) protein is U11-theraphotoxin-Hhn1t.